Consider the following 429-residue polypeptide: Ribosomal RNA small subunit methyltransferase B (429 aa).

S-adenosyl-L-methionine is bound by residues 254–260, Asp277, Asp303, and Asp322; that span reads CAAPGGK. The active-site Nucleophile is the Cys375.

Belongs to the class I-like SAM-binding methyltransferase superfamily. RsmB/NOP family.

It is found in the cytoplasm. It carries out the reaction cytidine(967) in 16S rRNA + S-adenosyl-L-methionine = 5-methylcytidine(967) in 16S rRNA + S-adenosyl-L-homocysteine + H(+). Functionally, specifically methylates the cytosine at position 967 (m5C967) of 16S rRNA. In Shigella flexneri serotype 5b (strain 8401), this protein is Ribosomal RNA small subunit methyltransferase B.